The chain runs to 210 residues: Oligoribonuclease (210 aa).

The 166-residue stretch at 12–177 folds into the Exonuclease domain; sequence LVWIDLEMTG…ADIVESIREL (166 aa). Tyr134 is a catalytic residue.

This sequence belongs to the oligoribonuclease family.

It is found in the cytoplasm. In terms of biological role, 3'-to-5' exoribonuclease specific for small oligoribonucleotides. This Corynebacterium diphtheriae (strain ATCC 700971 / NCTC 13129 / Biotype gravis) protein is Oligoribonuclease.